Reading from the N-terminus, the 202-residue chain is Small ribosomal subunit protein uS4 (202 aa).

A disordered region spans residues 22–43; that stretch reads TRKSARRAYPPGQHGQNRKKRS. Residues 90 to 152 enclose the S4 RNA-binding domain; the sequence is MRLDNTVFRL…APSRKLVENN (63 aa).

Belongs to the universal ribosomal protein uS4 family. Part of the 30S ribosomal subunit. Contacts protein S5. The interaction surface between S4 and S5 is involved in control of translational fidelity.

One of the primary rRNA binding proteins, it binds directly to 16S rRNA where it nucleates assembly of the body of the 30S subunit. Functionally, with S5 and S12 plays an important role in translational accuracy. The polypeptide is Small ribosomal subunit protein uS4 (Trichormus variabilis (strain ATCC 29413 / PCC 7937) (Anabaena variabilis)).